The following is a 121-amino-acid chain: Phosphoribosyl-ATP pyrophosphatase (121 aa).

The protein belongs to the PRA-PH family.

It localises to the cytoplasm. The enzyme catalyses 1-(5-phospho-beta-D-ribosyl)-ATP + H2O = 1-(5-phospho-beta-D-ribosyl)-5'-AMP + diphosphate + H(+). Its pathway is amino-acid biosynthesis; L-histidine biosynthesis; L-histidine from 5-phospho-alpha-D-ribose 1-diphosphate: step 2/9. This is Phosphoribosyl-ATP pyrophosphatase from Burkholderia cenocepacia (strain HI2424).